Reading from the N-terminus, the 164-residue chain is HTH-type transcriptional regulator IscR (164 aa).

The region spanning 2 to 131 (RLTSKGRYAV…GSISLEELVK (130 aa)) is the HTH rrf2-type domain. Residues 28–51 (LADISERQGISLSYLEQLFSRLRK) constitute a DNA-binding region (H-T-H motif). Residues Cys-92, Cys-98, and Cys-104 each coordinate [2Fe-2S] cluster. The tract at residues 140-164 (DRQDSDKRRTPNGRPQETINVNLRA) is disordered. Residues 152-164 (GRPQETINVNLRA) show a composition bias toward polar residues.

[2Fe-2S] cluster serves as cofactor.

Its function is as follows. Regulates the transcription of several operons and genes involved in the biogenesis of Fe-S clusters and Fe-S-containing proteins. The protein is HTH-type transcriptional regulator IscR of Xenorhabdus nematophila (strain ATCC 19061 / DSM 3370 / CCUG 14189 / LMG 1036 / NCIMB 9965 / AN6).